Reading from the N-terminus, the 330-residue chain is Polyprenal reductase (330 aa).

Residues 1–19 are Cytoplasmic-facing; that stretch reads MASWVGTELSALNPLRTLW. Residues 20–40 traverse the membrane as a helical segment; the sequence is LALAAAFLLALLLQLAPAGLL. Residues 41–74 are Lumenal-facing; it reads PNCALFQDLIRYGKTKLSGPRRPAVCRAFDVPKR. The helical transmembrane segment at 75 to 95 threads the bilayer; sequence YFSHFYVVSVLWNGFLLWFLS. Residues 96 to 132 are Cytoplasmic-facing; the sequence is RSLFLGAPFPNWLRALLRTLGSTQFRALEMESKASQM. A helical transmembrane segment spans residues 133–153; it reads LVGELALSAFLVLVFLWVHSV. Residues 154 to 168 lie on the Lumenal side of the membrane; that stretch reads RRLFECFYISVFSNA. The chain crosses the membrane as a helical span at residues 169 to 189; sequence VMHVVQYCFGLVYYVLVGLTV. The Cytoplasmic portion of the chain corresponds to 190–206; it reads LSQVPMDDKNVYMLGKN. The helical transmembrane segment at 207–227 threads the bilayer; that stretch reads LLLPARWFHVLGMMMFLWSSA. Residues 228–277 are Lumenal-facing; that stretch reads HQYECHVILSNLRRNKKGAIVHCQHRIPFGDWFEYVSSANYLAELMIYIS. The helical transmembrane segment at 278–298 threads the bilayer; sequence MAVTFGFHNFTWWLVVAYVFF. The Cytoplasmic segment spans residues 299-330; that stretch reads CQALSAFFNHKFYKSTFVSYPKHRKAFLPFLF.

The protein belongs to the steroid 5-alpha reductase family. Polyprenal reductase subfamily.

It localises to the endoplasmic reticulum membrane. It carries out the reaction a di-trans,poly-cis-dolichal + NADP(+) = a di-trans,poly-cis-polyprenal + NADPH + H(+). The catalysed reaction is a 3-oxo-5alpha-steroid + NADP(+) = a 3-oxo-Delta(4)-steroid + NADPH + H(+). It catalyses the reaction androst-4-ene-3,17-dione + NADPH + H(+) = 5alpha-androstan-3,17-dione + NADP(+). The enzyme catalyses 17beta-hydroxy-5alpha-androstan-3-one + NADP(+) = testosterone + NADPH + H(+). It participates in protein modification; protein glycosylation. Functionally, plays a key role in early steps of protein N-linked glycosylation by being involved in the conversion of polyprenol into dolichol. Acts as a polyprenal reductase that mediates the reduction of polyprenal into dolichal in a NADP-dependent mechanism. Dolichols are required for the synthesis of dolichol-linked monosaccharides and the oligosaccharide precursor used for N-glycosylation. Also able to convert testosterone (T) into 5-alpha-dihydrotestosterone (DHT). In Mesocricetus auratus (Golden hamster), this protein is Polyprenal reductase.